The chain runs to 159 residues: uncharacterized protein (159 aa).

4 helical membrane passes run 22–42, 45–65, 80–100, and 104–124; these read LFSS…SFTI, PIEY…LLTL, IWVS…SLSL, and FPSL…CLAF.

It localises to the membrane. This is an uncharacterized protein from Schizosaccharomyces pombe (strain 972 / ATCC 24843) (Fission yeast).